The primary structure comprises 103 residues: N(4)-acetylcytidine amidohydrolase (103 aa).

One can recognise an ASCH domain in the interval 7–93; that stretch reads TFFERFEQDI…VIAEIYPGLE (87 aa). Residue lysine 21 is the Proton acceptor of the active site. Catalysis depends on threonine 24, which acts as the Nucleophile. The Proton donor role is filled by glutamate 74.

This sequence belongs to the N(4)-acetylcytidine amidohydrolase family.

The catalysed reaction is N(4)-acetylcytidine + H2O = cytidine + acetate + H(+). It carries out the reaction N(4)-acetyl-2'-deoxycytidine + H2O = 2'-deoxycytidine + acetate + H(+). It catalyses the reaction N(4)-acetylcytosine + H2O = cytosine + acetate + H(+). Catalyzes the hydrolysis of N(4)-acetylcytidine (ac4C). The sequence is that of N(4)-acetylcytidine amidohydrolase from Shewanella putrefaciens (strain CN-32 / ATCC BAA-453).